We begin with the raw amino-acid sequence, 1153 residues long: MGSLSQQAHGPPDAPRSKEELLIHAKDFINQYFTSFQMNKTRAHFHRLGEINDLIEKSGTYDLTMAELTFGAKHAWRNAPGCIGRSQWSKLQVFDAREIGTPREMFEALCSHIRYATNEGKIRSTITIFPQRKEGRPDFRVWNTQLISYAGYKLGDGKVIGDPANVEFTEMCVEMGWKPKHGMFDLLPLVLSAAENSPEYFELPTELVLEVTLKHPEYPWFAEMGLKWYALPTDSGMLLDCGGLEFPSCPFNGWFMGTMIGSRNLCDPHRYNMLEPIGLKMGLNTETASSLWKDRVLIEVNVAVLYSFESANVTIVNHHDASTDFISHMDKEIKLRGGCPSDWVRMVPPMSGSTLEVFHQEMLLYNLHPAFVRQDVKPWKKHVWKSDQSVPINSCNPKRKLGFKALARAVEFSASLMSKALSSRVKCSIFYATETGRSERFARRLSEIFKPVFHSRVVCMDDYAVETLEHESLVMVITSTFGNGEPPENGKQFAQSLLDMKRKYDCDLGFLESCSSISTCIKSSILTEGPLAADVIGDRQSLAMGTGPLCNVRFAVFGLGSKAYPYYAAYGKYIYLMLQELGAERLVNYCAGDALYGQEQSFRAWSEEVFKASCEAFCLDNRNDAPGPQTKGDCSKVRIVPVENCQEPDLCQVLRNIHGKEVMPLILAERIQLQAKDSDQQTILIKLDAHNATDLKYAPGDHVAIFPANSPEIVDAILVRLDTSKGPSPDQVVKTEISTQLGTNDTWRSHLPICTSRTAFSFLLDVTTPPSQEILQVLATQASSDMDKHKLEQLASNSEAYEKWRLDLSPNILEILDEFPSLKIPPSLLLTQLPLLQPRYYSISSSQQKNPNEVHATIAVVRFKTQDGDGPVHEGVCSSWLNRSPIGTVVPCFLRSAPHFHLPEDPSLPIIMIGPGSGIAPFRSFWQQRLGEIENTMPSCENTMLSCETTIPSCENSMPSCENTMPSCENTMPSCENTIPSCENTIPSCENTMPSCENTIPSWERTMQPCQIILPSQTKKHFGEMVLYTGCRTAKHMIYAAELEEMKRLGVLSNYHVALSREAALPKMYVQDIIIKNAAAVYEIVMKKGGHFYVSGDVSMAHDVTRALELVLCQQGGREASQQVMSLRDENLFHEDIFGSFVRKAGGQRSEDE.

S3 provides a ligand contact to (6R)-L-erythro-5,6,7,8-tetrahydrobiopterin. C82 serves as a coordination point for heme b. L-arginine contacts are provided by Q145, W254, and N264. (6R)-L-erythro-5,6,7,8-tetrahydrobiopterin is bound at residue F358. The calmodulin-binding stretch occupies residues 397–417 (PKRKLGFKALARAVEFSASLM). The 184-residue stretch at 427-610 (CSIFYATETG…SFRAWSEEVF (184 aa)) folds into the Flavodoxin-like domain. Residue 556–587 (VFGLGSKAYPYYAAYGKYIYLMLQELGAERLV) coordinates FMN. In terms of domain architecture, FAD-binding FR-type spans 660–903 (KEVMPLILAE…LRSAPHFHLP (244 aa)). FAD is bound by residues 697-708 (YAPGDHVAIFPA) and 836-846 (LQPRYYSISSS). Residue 911-929 (IMIGPGSGIAPFRSFWQQR) participates in NADP(+) binding. 11 repeat units span residues 934–940 (ENTMPSC), 941–947 (ENTMLSC), 948–954 (ETTIPSC), 955–961 (ENSMPSC), 962–968 (ENTMPSC), 969–975 (ENTMPSC), 976–982 (ENTIPSC), 983–989 (ENTIPSC), 990–996 (ENTMPSC), 997–1003 (ENTIPSW), and 1004–1010 (ERTMQPC). Positions 934 to 1010 (ENTMPSCENT…PSWERTMQPC (77 aa)) are 11 X 7 AA tandem repeats of E-[NTR]-[ST]-[IM]-[PLQ]-[SP]-[CW]. Position 1089–1104 (1089–1104 (GGHFYVSGDVSMAHDV)) interacts with NADP(+).

This sequence belongs to the NOS family. Heme b is required as a cofactor. Requires FAD as cofactor. The cofactor is FMN. As to expression, expressed in the central nervous system, in the serotonergic cerebral giant cells. The isoform Long and isoform Short are expressed equally in the CNS.

It carries out the reaction 2 L-arginine + 3 NADPH + 4 O2 + H(+) = 2 L-citrulline + 2 nitric oxide + 3 NADP(+) + 4 H2O. With respect to regulation, stimulated by calcium/calmodulin. In terms of biological role, produces nitric oxide (NO) which is a messenger molecule with diverse functions throughout the body. The polypeptide is Nitric oxide synthase (NOS) (Lymnaea stagnalis (Great pond snail)).